The chain runs to 665 residues: Secreted LysM effector Lys3 (665 aa).

The first 19 residues, 1–19, serve as a signal peptide directing secretion; that stretch reads MLWLTVSLTGFALLGVVAA. N-linked (GlcNAc...) asparagine glycans are attached at residues Asn-43 and Asn-153. 3 consecutive LysM domains span residues 166–211, 216–264, and 303–349; these read RTYT…TLCL, TLRK…YICI, and KWYV…AYCV. A glycan (N-linked (GlcNAc...) asparagine) is linked at Asn-234. An N-linked (GlcNAc...) asparagine glycan is attached at Asn-398. Residues 409–454 enclose the LysM 4 domain; it reads SWSDAAKLNSCSFIAHINGVTVSQLLQWNPSLSKDSCSLSRELYYC. Asn-531 is a glycosylation site (N-linked (GlcNAc...) asparagine). Residues 585–610 are disordered; it reads SSVSMTNSAPATATSTGGPPAPTQDG. Residues 592–602 are compositionally biased toward low complexity; sequence SAPATATSTGG. N-linked (GlcNAc...) asparagine glycosylation occurs at Asn-614. Positions 617 to 663 constitute a LysM 5 domain; sequence KWHVVESGDGCWAIYTKYGITSDQLFEWNTKISKDCSNIWLGYAVCV.

It belongs to the secreted LysM effector family.

Might have a role in sequestration of chitin oligosaccharides (breakdown products of fungal cell walls that are released during invasion and act as triggers of host immunity) to dampen host defense. This Pochonia chlamydosporia (strain 123) (Metacordyceps chlamydosporia) protein is Secreted LysM effector Lys3.